A 352-amino-acid polypeptide reads, in one-letter code: Geranylgeranyl transferase type-1 subunit beta (352 aa).

4 PFTB repeats span residues 135-180 (VNKK…FILD), 187-228 (KESA…SLLG), 236-276 (FKEQ…MMID), and 283-325 (FASI…SFGN). Geranylgeranyl diphosphate contacts are provided by residues 213-215 (HGG) and 255-258 (RTNK). Positions 261 and 263 each coordinate Zn(2+). A geranylgeranyl diphosphate-binding site is contributed by 264–267 (YAFW). A Zn(2+)-binding site is contributed by H313.

It belongs to the protein prenyltransferase subunit beta family. In terms of assembly, heterodimer of an alpha and a beta subunit. Requires Zn(2+) as cofactor. The cofactor is Mg(2+).

It carries out the reaction geranylgeranyl diphosphate + L-cysteinyl-[protein] = S-geranylgeranyl-L-cysteinyl-[protein] + diphosphate. Functionally, catalyzes the transfer of a geranyl-geranyl moiety from geranyl-geranyl pyrophosphate to a cysteine at the fourth position from the C-terminus of proteins having the C-terminal sequence Cys-aliphatic-aliphatic-X. The chain is Geranylgeranyl transferase type-1 subunit beta (pggt1b) from Dictyostelium discoideum (Social amoeba).